A 133-amino-acid chain; its full sequence is Capsid protein (133 aa).

This sequence belongs to the Leviviricetes capsid protein family. As to quaternary structure, homodimer. The homodimers binds to the viral RNA via an operator hairpin, but also to many other RNA sequences in the viral genome; this interaction probably shifts the virus from the replicative to the assembly phase and ensures specific encapsidation of the viral genome. Interacts with the maturation protein A2.

It localises to the virion. Its function is as follows. Capsid protein self-assembles to form an icosahedral capsid with a T=3 symmetry, about 26 nm in diameter, and consisting of 89 capsid proteins dimers (178 capsid proteins). Involved in viral genome encapsidation through the interaction between a capsid protein dimer and the multiple packaging signals present in the RNA genome. Binding of the capsid proteins to the viral RNA induces a conformational change required for efficient T=3 shell formation. The capsid also contains 1 copy of the A2 maturation protein. In terms of biological role, acts as a translational repressor of viral replicase synthesis late in infection. This latter function is the result of capsid protein interaction with an RNA hairpin which contains the replicase ribosome-binding site. The chain is Capsid protein from Escherichia virus Qbeta (Bacteriophage Q-beta).